We begin with the raw amino-acid sequence, 989 residues long: Serine-repeat antigen protein 5 (989 aa).

A signal peptide spans 1–16 (MKSYISLFFILCVIFN). 2 disordered regions span residues 26-91 (SQTG…EKQD) and 165-245 (LPSN…RNLQ). Composition is skewed to low complexity over residues 52–87 (QGSTGASQPGSSEPSNPVSSGHSVSTVSVSQTSTSS), 167–180 (SNGTTGEQGSSTGT), and 191–225 (SSSSSSSSSSSSSSSSSSSSSSSSSSSSSSSSSSS). Phosphoserine is present on Ser-167. N-linked (GlcNAc...) asparagine glycosylation is present at Asn-168. Residues 208-245 (SSSSSSSSSSSSSSSSSSESLPANGPDSPTVKPPRNLQ) form an interaction with PTKL region. Residue Asn-310 is glycosylated (N-linked (GlcNAc...) asparagine). The interaction with host VTN stretch occupies residues 365–382 (YKYLSEDIVSNFKEIKAE). Residues Cys-437 and Cys-489 are joined by a disulfide bond. Thr-541 is subject to Phosphothreonine. 5 disulfides stabilise this stretch: Cys-559-Cys-564, Cys-573-Cys-602, Cys-585-Cys-628, Cys-619-Cys-664, and Cys-747-Cys-801. Positions 571–989 (NNCISNLQVE…TNNECYFCYV (419 aa)) are thiol-protease-like. Catalysis depends on residues His-754 and Asn-779. The N-linked (GlcNAc...) asparagine glycan is linked to Asn-820. A propeptide spans 835 to 878 (KASPEFYHNLYFKNFNVGKKNLFSEKEDNENNKKLGNNYIIFGQ) (inhibition peptide). A Phosphoserine modification is found at Ser-858.

Belongs to the peptidase C1 family. As to quaternary structure, may interact (via C-terminus) with PTKL (via SAM domain). In terms of assembly, interacts (via C-terminus) with human VTN (via hemopexin repeat 2); may form heterotetramers of two VTN and SERA5 P47 heterodimers; the interaction may protect merozoites from phagocytosis by host monocytes; VTN glycosylation appears to be dispensable for the interaction. Monomer. Interacts with kinase CPK1/CDPK1 at the schizont stage. In terms of processing, phosphorylation by CPK1/CDPK1 increases SERA5 protease activity towards a synthetic peptide in vitro. Post-translationally, just prior to merozoite egress from host erythrocytes, proteolytically cleaved into multiple fragments. Cleaved by SUB1 into p47 and p73, p73 is further cleaved by SUB1 into p56 and p18 and p56 is further processed into p50 by an unidentified protease. p47 remains covalently associated with p18 via disulfide bond. p47 can be processed into p25n and p25c by SUB1. p25c and p25n remain associated with p18. Proteolytic processing is essential for merozoite egress from host erythrocytes. The cleavage of the propeptide to produce p50 is necessary for protease activity and to promote merozoite egress.

It is found in the parasitophorous vacuole. Its subcellular location is the secreted. The protein resides in the cell membrane. In terms of biological role, plays an essential role during the asexual blood stage development by controlling the kinetics of merozoite egress from host erythrocytes. Specifically, prevents premature rupture of the parasitophorous vacuole and host erythrocyte membranes. Functionally, may prevent merozoite phagocytosis by host monocytes via interaction with host VTN at the merozoite surface. Plays a role in parasite growth. Its function is as follows. Protease activity is controversial. This chain is Serine-repeat antigen protein 5, found in Plasmodium falciparum (isolate CDC / Honduras).